A 514-amino-acid polypeptide reads, in one-letter code: tRNA-2-methylthio-N(6)-dimethylallyladenosine synthase (514 aa).

Positions 68 to 186 (RTFLIKTYGC…LPEILEEAYL (119 aa)) constitute an MTTase N-terminal domain. Positions 77, 113, 147, 223, 227, and 230 each coordinate [4Fe-4S] cluster. The Radical SAM core domain occupies 209–439 (REGSTKAWVN…NKKVGHYSEK (231 aa)). The region spanning 442-505 (NQYEGKTVTV…QYSLNGTFKE (64 aa)) is the TRAM domain.

Belongs to the methylthiotransferase family. MiaB subfamily. Monomer. It depends on [4Fe-4S] cluster as a cofactor.

The protein localises to the cytoplasm. The enzyme catalyses N(6)-dimethylallyladenosine(37) in tRNA + (sulfur carrier)-SH + AH2 + 2 S-adenosyl-L-methionine = 2-methylsulfanyl-N(6)-dimethylallyladenosine(37) in tRNA + (sulfur carrier)-H + 5'-deoxyadenosine + L-methionine + A + S-adenosyl-L-homocysteine + 2 H(+). Its function is as follows. Catalyzes the methylthiolation of N6-(dimethylallyl)adenosine (i(6)A), leading to the formation of 2-methylthio-N6-(dimethylallyl)adenosine (ms(2)i(6)A) at position 37 in tRNAs that read codons beginning with uridine. This is tRNA-2-methylthio-N(6)-dimethylallyladenosine synthase from Staphylococcus haemolyticus (strain JCSC1435).